The primary structure comprises 226 residues: Cytidylate kinase (226 aa).

Residue Gly-10–Thr-18 coordinates ATP.

Belongs to the cytidylate kinase family. Type 1 subfamily.

It is found in the cytoplasm. The catalysed reaction is CMP + ATP = CDP + ADP. The enzyme catalyses dCMP + ATP = dCDP + ADP. In Streptococcus pyogenes serotype M18 (strain MGAS8232), this protein is Cytidylate kinase.